The chain runs to 590 residues: RNA-binding protein 47 (590 aa).

Over residues 1–21 (MTAEDSTTAMNSDPTVGSSTK) the composition is skewed to polar residues. The disordered stretch occupies residues 1 to 26 (MTAEDSTTAMNSDPTVGSSTKVPEGV). RRM domains lie at 71–149 (CEVF…CSVD), 151–233 (CRLF…WAEP), and 246–318 (KILY…LAKP). Asymmetric dimethylarginine; alternate is present on residues Arg396 and Arg407. Residues Arg396 and Arg407 each carry the omega-N-methylarginine; alternate modification.

This sequence belongs to the RRM RBM47 family. Homodimer. Interacts with A1CF. Interacts with APOBEC1; form an mRNA editing complex. Interacts with RBPMS.

The protein localises to the nucleus. The protein resides in the cytoplasm. In terms of biological role, single-stranded RNA-binding protein that functions in a variety of RNA processes, including alternative splicing, RNA stabilization, and RNA editing. Functions as an enzyme-substrate adapter for the cytidine deaminase APOBEC1. With APOBEC1 forms an mRNA editing complex involved into cytidine to uridine editing of a variety of mRNA molecules. Through the binding of their 3'UTR, also stabilizes a variety of mRNAs and regulates the expression of genes such as the interferon alpha/beta receptor and interleukin-10. Also involved in the alternative splicing of several genes including TJP1. Binds the pre-mRNA (U)GCAUG consensus sequences in downstream intronic regions of alternative exons regulating their exclusion and inclusion into mRNAs. Independently of its RNA-binding activity, could negatively regulate MAVS by promoting its lysosomal degradation. This chain is RNA-binding protein 47, found in Rattus norvegicus (Rat).